The sequence spans 227 residues: PKHD-type hydroxylase PHZ_c0292 (227 aa).

A Fe2OG dioxygenase domain is found at 78-178; sequence VVFPPLFNRY…RVCSFFWIQS (101 aa). Residues H96, D98, and H159 each contribute to the Fe cation site. Residue R169 coordinates 2-oxoglutarate.

Fe(2+) is required as a cofactor. The cofactor is L-ascorbate.

This Phenylobacterium zucineum (strain HLK1) protein is PKHD-type hydroxylase PHZ_c0292.